The sequence spans 545 residues: ATP synthase subunit alpha (545 aa).

174-181 lines the ATP pocket; it reads GDRKTGKT.

This sequence belongs to the ATPase alpha/beta chains family. F-type ATPases have 2 components, CF(1) - the catalytic core - and CF(0) - the membrane proton channel. CF(1) has five subunits: alpha(3), beta(3), gamma(1), delta(1), epsilon(1). CF(0) has three main subunits: a(1), b(2) and c(9-12). The alpha and beta chains form an alternating ring which encloses part of the gamma chain. CF(1) is attached to CF(0) by a central stalk formed by the gamma and epsilon chains, while a peripheral stalk is formed by the delta and b chains.

Its subcellular location is the cell membrane. It carries out the reaction ATP + H2O + 4 H(+)(in) = ADP + phosphate + 5 H(+)(out). Its function is as follows. Produces ATP from ADP in the presence of a proton gradient across the membrane. The alpha chain is a regulatory subunit. This is ATP synthase subunit alpha from Cutibacterium acnes (strain DSM 16379 / KPA171202) (Propionibacterium acnes).